Reading from the N-terminus, the 483-residue chain is Rhamnulokinase (483 aa).

Residue 11–15 (ASSGR) participates in ATP binding. Residues G79 and 234–236 (HDT) contribute to the substrate site. The Proton acceptor role is filled by D235. T257 contributes to the ATP binding site. N294 contacts substrate. Q302 lines the ATP pocket. C352 and C369 are oxidised to a cystine. ATP is bound at residue G401.

This sequence belongs to the rhamnulokinase family. The cofactor is Mg(2+).

It catalyses the reaction L-rhamnulose + ATP = L-rhamnulose 1-phosphate + ADP + H(+). It participates in carbohydrate degradation; L-rhamnose degradation; glycerone phosphate from L-rhamnose: step 2/3. Its function is as follows. Involved in the catabolism of L-rhamnose (6-deoxy-L-mannose). Catalyzes the transfer of the gamma-phosphate group from ATP to the 1-hydroxyl group of L-rhamnulose to yield L-rhamnulose 1-phosphate. In Listeria monocytogenes serotype 4b (strain F2365), this protein is Rhamnulokinase.